The following is a 467-amino-acid chain: Cis-zeatin O-glucosyltransferase 1 (467 aa).

His21 acts as the Proton acceptor in catalysis. 2 residues coordinate an anthocyanidin: His21 and Asn91. Asp127 functions as the Charge relay in the catalytic mechanism. UDP-alpha-D-glucose contacts are provided by Ala343, Gln345, His360, Trp363, Asn364, Ser365, Glu368, Asp384, and Gln385.

This sequence belongs to the UDP-glycosyltransferase family. In terms of tissue distribution, highly expressed in root. Expressed at lower level in kernel and cob. Weakly expressed in leaves. Weakly or not expressed in stems.

The enzyme catalyses cis-zeatin + UDP-alpha-D-glucose = O-beta-D-glucosyl-cis-zeatin + UDP + H(+). In terms of biological role, utilizes UDP-glucose as the sugar donor and catalyzes the formation of O-beta-D-glucosyl-cis-zeatin from cis-zeatin. May regulate active versus storage forms of cytokinins and could have an impact on seed growth. This Zea mays (Maize) protein is Cis-zeatin O-glucosyltransferase 1 (CISZOG1).